Here is a 271-residue protein sequence, read N- to C-terminus: MMIHGFQSSHQDFSFGPWKLTASKTHIMKSADVEKLADELHMPSLPEMMFGDNVLRIQHGSGFGIEFNATDALRCVNNYQGMLKVACAEEWQESRTEGEHSKEVIKPYDWTYTTDYKGTLLGESLKLKVVPTTDHIDTEKLKAREQIKFFEEVLLFEDELHDHGVSSLSVKIRVMPSSFFLLLRFFLRIDGVLIRMNDTRLYHEADKTYMLREYTSRESKIANLMHVPPSLFTEPNEISQYLPIKEAVCEKLVFPERIDPNPVDSESAPSE.

Position 106 is an N6-acetyllysine (K106). Positions 173–271 are interaction with PPP2CA; sequence RVMPSSFFLL…PVDSESAPSE (99 aa). S265 and S270 each carry phosphoserine.

Belongs to the TIP41 family. Interacts with PPP2CA. Interacts with PPP2CB, PPP4C and PPP6C. Interacts with IGBP1; the interaction is dependent on PPP2CA. Associates with a protein phosphatase 2A PP2A(C):IGBP1 complex. Interacts with PPP4C and PPP4R2.

Its subcellular location is the cytoplasm. May be a allosteric regulator of serine/threonine-protein phosphatase 2A (PP2A). Inhibits catalytic activity of the PP2A(D) core complex in vitro. The PP2A(C):TIPRL complex does not show phosphatase activity. Acts as a negative regulator of serine/threonine-protein phosphatase 4 probably by inhibiting the formation of the active PPP4C:PPP4R2 complex; the function is proposed to implicate it in DNA damage response by promoting H2AX phosphorylated on Ser-140 (gamma-H2AX). May play a role in the regulation of ATM/ATR signaling pathway controlling DNA replication and repair. The sequence is that of TIP41-like protein (Tiprl) from Rattus norvegicus (Rat).